Consider the following 250-residue polypeptide: 2,3-bisphosphoglycerate-dependent phosphoglycerate mutase (250 aa).

Residues 8–15 (RHGQSAWN), 21–22 (TG), arginine 60, 87–90 (ERHY), lysine 98, 114–115 (RR), and 183–184 (GN) each bind substrate. The active-site Tele-phosphohistidine intermediate is histidine 9. Residue glutamate 87 is the Proton donor/acceptor of the active site.

The protein belongs to the phosphoglycerate mutase family. BPG-dependent PGAM subfamily. Homodimer.

The enzyme catalyses (2R)-2-phosphoglycerate = (2R)-3-phosphoglycerate. Its pathway is carbohydrate degradation; glycolysis; pyruvate from D-glyceraldehyde 3-phosphate: step 3/5. Functionally, catalyzes the interconversion of 2-phosphoglycerate and 3-phosphoglycerate. The polypeptide is 2,3-bisphosphoglycerate-dependent phosphoglycerate mutase (Nitratidesulfovibrio vulgaris (strain ATCC 29579 / DSM 644 / CCUG 34227 / NCIMB 8303 / VKM B-1760 / Hildenborough) (Desulfovibrio vulgaris)).